A 619-amino-acid polypeptide reads, in one-letter code: 1-deoxy-D-xylulose-5-phosphate synthase (619 aa).

Thiamine diphosphate contacts are provided by residues histidine 74 and 115–117 (GHS). Residue aspartate 146 participates in Mg(2+) binding. Residues 147-148 (GA), asparagine 175, tyrosine 285, and glutamate 365 each bind thiamine diphosphate. Mg(2+) is bound at residue asparagine 175.

Belongs to the transketolase family. DXPS subfamily. Homodimer. It depends on Mg(2+) as a cofactor. Thiamine diphosphate is required as a cofactor.

It carries out the reaction D-glyceraldehyde 3-phosphate + pyruvate + H(+) = 1-deoxy-D-xylulose 5-phosphate + CO2. The protein operates within metabolic intermediate biosynthesis; 1-deoxy-D-xylulose 5-phosphate biosynthesis; 1-deoxy-D-xylulose 5-phosphate from D-glyceraldehyde 3-phosphate and pyruvate: step 1/1. Catalyzes the acyloin condensation reaction between C atoms 2 and 3 of pyruvate and glyceraldehyde 3-phosphate to yield 1-deoxy-D-xylulose-5-phosphate (DXP). In Clostridium acetobutylicum (strain ATCC 824 / DSM 792 / JCM 1419 / IAM 19013 / LMG 5710 / NBRC 13948 / NRRL B-527 / VKM B-1787 / 2291 / W), this protein is 1-deoxy-D-xylulose-5-phosphate synthase.